Consider the following 247-residue polypeptide: Lys-63-specific deubiquitinase BRCC36 (247 aa).

Alanine 2 is subject to N-acetylalanine. One can recognise an MPN domain in the interval 12 to 179; that stretch reads VHLESDAFLV…YTCFQSIQAQ (168 aa). Histidine 122, histidine 124, and aspartate 135 together coordinate Zn(2+). The short motif at 122–135 is the JAMM motif element; it reads HSHPHITVWPSHVD. Serine 189 bears the Phosphoserine mark.

It belongs to the peptidase M67A family. BRCC36 subfamily. As to quaternary structure, component of the ARISC complex, at least composed of UIMC1/RAP80, ABRAXAS1, BRCC3/BRCC36, BABAM2 and BABAM1/NBA1. Component of the BRCA1-A complex, at least composed of BRCA1, BARD1, UIMC1/RAP80, ABRAXAS1, BRCC3/BRCC36, BABAM2 and BABAM1/NBA1. In the BRCA1-A complex, interacts directly with ABRAXAS1 and BABAM2. Component of the BRISC complex, at least composed of ABRAXAS2, BRCC3/BRCC36, BABAM2 and BABAM1/NBA1. Identified in a complex with SHMT2 and the other subunits of the BRISC complex. In the BRISC complex, interacts directly with ABRAXAS2. Identified in a complex with ABRAXAS2 and NUMA1. The BRISC complex interacts with the CSN complex. Component of the BRCA1/BRCA2 containing complex (BRCC), which also contains BRCA1, BRCA2, BARD1, BABAM2 and RAD51. BRCC is a ubiquitin E3 ligase complex that enhances cellular survival following DNA damage. Interacts with BRCA1. Binds polyubiquitin. Interacts with PWWP2B. Interacts with HDAC1; this interaction is enhanced in the presence of PWWP2B. Requires Zn(2+) as cofactor.

It localises to the nucleus. Its subcellular location is the cytoplasm. The protein localises to the cytoskeleton. The protein resides in the spindle pole. Metalloprotease that specifically cleaves 'Lys-63'-linked polyubiquitin chains. Does not have activity toward 'Lys-48'-linked polyubiquitin chains. Component of the BRCA1-A complex, a complex that specifically recognizes 'Lys-63'-linked ubiquitinated histones H2A and H2AX at DNA lesions sites, leading to target the BRCA1-BARD1 heterodimer to sites of DNA damage at double-strand breaks (DSBs). In the BRCA1-A complex, it specifically removes 'Lys-63'-linked ubiquitin on histones H2A and H2AX, antagonizing the RNF8-dependent ubiquitination at double-strand breaks (DSBs). Catalytic subunit of the BRISC complex, a multiprotein complex that specifically cleaves 'Lys-63'-linked ubiquitin in various substrates. Mediates the specific 'Lys-63'-specific deubiquitination associated with the COP9 signalosome complex (CSN), via the interaction of the BRISC complex with the CSN complex. The BRISC complex is required for normal mitotic spindle assembly and microtubule attachment to kinetochores via its role in deubiquitinating NUMA1. Plays a role in interferon signaling via its role in the deubiquitination of the interferon receptor IFNAR1; deubiquitination increases IFNAR1 activity by enhancing its stability and cell surface expression. Acts as a regulator of the NLRP3 inflammasome by mediating deubiquitination of NLRP3, leading to NLRP3 inflammasome assembly. Down-regulates the response to bacterial lipopolysaccharide (LPS) via its role in IFNAR1 deubiquitination. Deubiquitinates HDAC1 and PWWP2B leading to their stabilization. This Pongo abelii (Sumatran orangutan) protein is Lys-63-specific deubiquitinase BRCC36 (BRCC3).